Here is a 407-residue protein sequence, read N- to C-terminus: MTDKAAQAVRLFTSESVTEGHPDKICDAISDAILDALLEEDPDAHVAVETLVTTGQVHVVGEVRTSGYVEIPQIVRKTLVEIGFTSSDVGFDGHTCGVNVAIGEQSQEIGAGVDASTEVRSGTFEDDDQYGAGDQGLMFGYATNETPEFMPLPISTAHHLSRRLTHVRKEGIVPSLRPDGKTQVTFAYDENDVPTRLETIVISTQHDPEVTQEWLAEQLRTHVVEWVVNDADLSQYYTEDTELLINPSGSFILGGPMGDAGLTGRKIIVDTYGGMARHGGGAFSGKDPSKVDRSAAYAMRWVAKNIVAAGLADRAEVQVAYAIGRAKPVGLYVETFGTAHEGLSDADIQAAVNKVFDLRPAAIIRELDLQRPIYRQTAAYGHFGRTDVELPWEDTSRADDLRRAAGL.

His21 is an ATP binding site. Position 23 (Asp23) interacts with Mg(2+). K(+) is bound at residue Glu49. L-methionine is bound by residues Glu62 and Gln105. Residues 105–115 are flexible loop; the sequence is QSQEIGAGVDA. Residues 179–181, Asp259, 265–266, Ala282, and Lys286 each bind ATP; these read DGK and RK. L-methionine is bound at residue Asp259. Lys290 provides a ligand contact to L-methionine.

Belongs to the AdoMet synthase family. As to quaternary structure, homotetramer; dimer of dimers. The cofactor is Mg(2+). It depends on K(+) as a cofactor.

The protein resides in the cytoplasm. It carries out the reaction L-methionine + ATP + H2O = S-adenosyl-L-methionine + phosphate + diphosphate. The protein operates within amino-acid biosynthesis; S-adenosyl-L-methionine biosynthesis; S-adenosyl-L-methionine from L-methionine: step 1/1. Catalyzes the formation of S-adenosylmethionine (AdoMet) from methionine and ATP. The overall synthetic reaction is composed of two sequential steps, AdoMet formation and the subsequent tripolyphosphate hydrolysis which occurs prior to release of AdoMet from the enzyme. In Corynebacterium aurimucosum (strain ATCC 700975 / DSM 44827 / CIP 107346 / CN-1) (Corynebacterium nigricans), this protein is S-adenosylmethionine synthase.